The following is a 98-amino-acid chain: HssA/B-like protein 33 (98 aa).

2 disordered regions span residues 1–29 (MTLFSSISSMSSSMTSSRSSFSSFGSGTS) and 60–98 (AKSSGGSCGGKGGPHNHGHGNGHGPHGHGGKGSGGSCSC). Residues 60–72 (AKSSGGSCGGKGG) are compositionally biased toward gly residues. Over residues 73–88 (PHNHGHGNGHGPHGHG) the composition is skewed to basic residues. The segment covering 89-98 (GKGSGGSCSC) has biased composition (gly residues).

It belongs to the hssA/B family.

In Dictyostelium discoideum (Social amoeba), this protein is HssA/B-like protein 33 (hssl33).